The chain runs to 133 residues: Profilin (133 aa).

Belongs to the profilin family.

In terms of biological role, more likely to influence phosphoinositide metabolism than actin assembly. The protein is Profilin of Cowpox virus (strain GRI-90 / Grishak) (CPV).